The primary structure comprises 151 residues: Large ribosomal subunit protein uL30 (151 aa).

The protein belongs to the universal ribosomal protein uL30 family. Part of the 50S ribosomal subunit.

The protein is Large ribosomal subunit protein uL30 of Methanothrix thermoacetophila (strain DSM 6194 / JCM 14653 / NBRC 101360 / PT) (Methanosaeta thermophila).